Reading from the N-terminus, the 228-residue chain is tRNA (guanine-N(1)-)-methyltransferase (228 aa).

S-adenosyl-L-methionine-binding positions include glycine 111 and 131–136; that span reads IGDFIL.

This sequence belongs to the RNA methyltransferase TrmD family. Homodimer.

The protein localises to the cytoplasm. The catalysed reaction is guanosine(37) in tRNA + S-adenosyl-L-methionine = N(1)-methylguanosine(37) in tRNA + S-adenosyl-L-homocysteine + H(+). Functionally, specifically methylates guanosine-37 in various tRNAs. This Pelagibacter ubique (strain HTCC1062) protein is tRNA (guanine-N(1)-)-methyltransferase.